The following is a 553-amino-acid chain: MRSDVIKKGYIRAPHRSLLRATGLKDDDFKKPFIGVCNSFAEIIPGHFFLNKFAKIIKDEIRKNGCVPFEFNCIGVDDGIAMGHDGMLYSLPSREIIANSVETMMNAHKLDALICIPNCDKIVPGMIMGALRVNVPTIFISGGPMAAGRGKNGEALDLNSTFEAVGAYEVKKINKKELHDIECAACPGAGSCSGMFTANSMNTLCEAMGIALKGNGTILAMTKNRKKLAKKAARRICEIALDDKFKIRNIINKKAVENAMVVDMAMGGSSNTILHMLAISREAGCALDIKELNEISKKTPHIAKIAPSKPEIHMQDVHNAGGINAIMNEVKDLLHLDNLTVTGETLGERIKGAKIKDEDVIHKVENAYSKVGGLAILFGNLAEQGCVIKAAGIIGSRKFSGKAICFNSQDEAIEGISGGKVKKGDVVVIRYEGPKGGPGMQEMLSPTSLIVGRGLGADVALITDGRFSGATRGLCIGHVSPEAAEGGMIGLLKDGDIIDIDVDNFSINVRLSEDEIAERKKEFKYGGKKVQSRWLRQYQKLVTNASNGAILEA.

Aspartate 78 lines the Mg(2+) pocket. [2Fe-2S] cluster is bound at residue cysteine 119. Residues aspartate 120 and lysine 121 each contribute to the Mg(2+) site. Position 121 is an N6-carboxylysine (lysine 121). Cysteine 192 is a binding site for [2Fe-2S] cluster. A Mg(2+)-binding site is contributed by glutamate 442. Serine 468 serves as the catalytic Proton acceptor.

The protein belongs to the IlvD/Edd family. Homodimer. It depends on [2Fe-2S] cluster as a cofactor. Mg(2+) is required as a cofactor.

It catalyses the reaction (2R)-2,3-dihydroxy-3-methylbutanoate = 3-methyl-2-oxobutanoate + H2O. The catalysed reaction is (2R,3R)-2,3-dihydroxy-3-methylpentanoate = (S)-3-methyl-2-oxopentanoate + H2O. The protein operates within amino-acid biosynthesis; L-isoleucine biosynthesis; L-isoleucine from 2-oxobutanoate: step 3/4. It functions in the pathway amino-acid biosynthesis; L-valine biosynthesis; L-valine from pyruvate: step 3/4. Functionally, functions in the biosynthesis of branched-chain amino acids. Catalyzes the dehydration of (2R,3R)-2,3-dihydroxy-3-methylpentanoate (2,3-dihydroxy-3-methylvalerate) into 2-oxo-3-methylpentanoate (2-oxo-3-methylvalerate) and of (2R)-2,3-dihydroxy-3-methylbutanoate (2,3-dihydroxyisovalerate) into 2-oxo-3-methylbutanoate (2-oxoisovalerate), the penultimate precursor to L-isoleucine and L-valine, respectively. The protein is Dihydroxy-acid dehydratase of Campylobacter hominis (strain ATCC BAA-381 / DSM 21671 / CCUG 45161 / LMG 19568 / NCTC 13146 / CH001A).